The sequence spans 365 residues: Glucose 1-dehydrogenase 1 (365 aa).

Asp38 lines the Zn(2+) pocket. Thr40 is a substrate binding site. Zn(2+) is bound by residues His63 and Glu64. Positions 115 and 151 each coordinate substrate. Position 151 (Glu151) interacts with Zn(2+). NADP(+)-binding positions include 182–185 (NGSL), 207–208 (RR), 272–274 (LGV), and 301–303 (SVN). Asn303 lines the substrate pocket.

Belongs to the zinc-containing alcohol dehydrogenase family. Glucose 1-dehydrogenase subfamily. Requires Zn(2+) as cofactor.

The enzyme catalyses D-glucose + NAD(+) = D-glucono-1,5-lactone + NADH + H(+). It carries out the reaction D-glucose + NADP(+) = D-glucono-1,5-lactone + NADPH + H(+). Catalyzes the NAD(P)(+)-dependent oxidation of D-glucose to D-gluconate via gluconolactone. Can utilize both NAD(+) and NADP(+) as electron acceptor. Is involved in the degradation of glucose through a modified Entner-Doudoroff pathway. The protein is Glucose 1-dehydrogenase 1 of Haloterrigena turkmenica (strain ATCC 51198 / DSM 5511 / JCM 9101 / NCIMB 13204 / VKM B-1734 / 4k) (Halococcus turkmenicus).